Consider the following 426-residue polypeptide: D-tagatose-1,6-bisphosphate aldolase subunit KbaZ (426 aa).

It belongs to the GatZ/KbaZ family. KbaZ subfamily. Forms a complex with KbaY.

The protein operates within carbohydrate metabolism; D-tagatose 6-phosphate degradation; D-glyceraldehyde 3-phosphate and glycerone phosphate from D-tagatose 6-phosphate: step 2/2. Functionally, component of the tagatose-1,6-bisphosphate aldolase KbaYZ that is required for full activity and stability of the Y subunit. Could have a chaperone-like function for the proper and stable folding of KbaY. When expressed alone, KbaZ does not show any aldolase activity. The sequence is that of D-tagatose-1,6-bisphosphate aldolase subunit KbaZ from Shigella flexneri.